A 379-amino-acid polypeptide reads, in one-letter code: GDSL esterase/lipase EXL2 (379 aa).

A signal peptide spans 1-35 (MKRNSINIHHVTSFSSSPFWCVFFLVLLCKTSTNA). Asn42 carries an N-linked (GlcNAc...) asparagine glycan. Residue Ser54 is the Nucleophile of the active site. Residues Asp358 and His361 contribute to the active site.

This sequence belongs to the 'GDSL' lipolytic enzyme family.

Its subcellular location is the secreted. This Arabidopsis thaliana (Mouse-ear cress) protein is GDSL esterase/lipase EXL2 (EXL2).